The sequence spans 228 residues: Aquaporin Z (228 aa).

A run of 5 helical transmembrane segments spans residues 1–21 (MLNK…GGCG), 46–66 (TVLT…NPAV), 82–102 (IPYW…LYVI), 129–149 (MMAG…IILG), and 154–174 (LAPA…IHLV). The short motif at 63–65 (NPA) is the NPA 1 element. Residues 184-186 (NPA) carry the NPA 2 motif. A helical transmembrane segment spans residues 205 to 225 (LFWVAPLVGAVIGAIIWKGLL).

This sequence belongs to the MIP/aquaporin (TC 1.A.8) family. Homotetramer.

The protein localises to the cell inner membrane. It catalyses the reaction H2O(in) = H2O(out). In terms of biological role, channel that permits osmotically driven movement of water in both directions. It is involved in the osmoregulation and in the maintenance of cell turgor during volume expansion in rapidly growing cells. It mediates rapid entry or exit of water in response to abrupt changes in osmolarity. This Brucella suis biovar 1 (strain 1330) protein is Aquaporin Z.